A 383-amino-acid polypeptide reads, in one-letter code: Pyruvate synthase subunit PorA (383 aa).

Heterotetramer of one alpha, one beta, one delta and one gamma chain.

It catalyses the reaction 2 oxidized [2Fe-2S]-[ferredoxin] + pyruvate + CoA = 2 reduced [2Fe-2S]-[ferredoxin] + acetyl-CoA + CO2 + H(+). This Methanothermobacter thermautotrophicus (strain ATCC 29096 / DSM 1053 / JCM 10044 / NBRC 100330 / Delta H) (Methanobacterium thermoautotrophicum) protein is Pyruvate synthase subunit PorA (porA).